Here is a 136-residue protein sequence, read N- to C-terminus: Succinate dehydrogenase 2 membrane subunit SdhC (136 aa).

Helical transmembrane passes span 32 to 52 (RISG…AAML), 70 to 90 (IVGL…LNGI), and 109 to 129 (LWII…VVGI). H85 contributes to the heme binding site.

The protein belongs to the cytochrome b560 family. In terms of assembly, part of an enzyme complex containing four subunits: a flavoprotein (SdhA), an iron-sulfur protein (SdhB), plus two membrane-anchoring proteins (SdhC and SdhD). The cofactor is heme.

The protein localises to the cell membrane. Functionally, membrane-anchoring subunit of succinate dehydrogenase 2 (Sdh2). Sdh2 may catalyze the two-electron oxidation of succinate to fumarate with a corresponding reduction of quinone to quinol under low oxygen conditions, when the primary aerobic succinate dehydrogenase (Sdh1) is inhibited. Sdh2 seems to be the generator of the proton motive force (PMF) under hypoxia. In Mycobacterium tuberculosis (strain ATCC 25618 / H37Rv), this protein is Succinate dehydrogenase 2 membrane subunit SdhC.